The chain runs to 199 residues: Melanocortin-2 receptor accessory protein 2B (199 aa).

Asparagine 6 carries an N-linked (GlcNAc...) asparagine glycan. The helical transmembrane segment at 39–59 threads the bilayer; sequence IVIGFWVGLAVFVIFMFFVLT.

The protein belongs to the MRAP family. As to quaternary structure, interacts with mc4r. In terms of tissue distribution, expressed in adult brain.

Its subcellular location is the cell membrane. It is found in the endoplasmic reticulum membrane. Functionally, activator of melanocortin receptor 4 (mc4r), a receptor involved in energy homeostasis. Plays a role after larval development in the control of energy homeostasis and body weight regulation by increasing ligand-sensitivity of mc4r and mc4r-mediated generation of cAMP once the zebrafish begins feeding, increasing the capacity for regulated feeding and growth. This chain is Melanocortin-2 receptor accessory protein 2B (mrap2b), found in Danio rerio (Zebrafish).